A 440-amino-acid chain; its full sequence is Trigger factor (440 aa).

Residues 163 to 248 enclose the PPIase FKBP-type domain; sequence GDILTVDFLG…AKALKRRVAP (86 aa).

This sequence belongs to the FKBP-type PPIase family. Tig subfamily.

The protein localises to the cytoplasm. It catalyses the reaction [protein]-peptidylproline (omega=180) = [protein]-peptidylproline (omega=0). Functionally, involved in protein export. Acts as a chaperone by maintaining the newly synthesized protein in an open conformation. Functions as a peptidyl-prolyl cis-trans isomerase. The sequence is that of Trigger factor from Acidiphilium cryptum (strain JF-5).